The chain runs to 825 residues: Cytosolic phospholipase A2 delta (825 aa).

The region spanning 14–133 is the C2 domain; the sequence is SPERLHGHPY…LPGQLLQKTF (120 aa). Ca(2+) is bound by residues Asp-47, Asp-53, Asp-103, Asp-105, and Asp-111. The 545-residue stretch at 281–825 folds into the PLA2c domain; that stretch reads DCCPKELSVR…SETRPLGVKT (545 aa). 339–340 contributes to the substrate binding site; that stretch reads GG. Ser-370 serves as the catalytic Nucleophile. Catalysis depends on Asp-654, which acts as the Proton acceptor.

Ca(2+) serves as cofactor. Weakly or not expressed in most tissues. Detected in placenta of 17.5 dpc embryos.

The protein resides in the cytoplasm. It localises to the cytosol. It is found in the membrane. It catalyses the reaction a 1,2-diacyl-sn-glycero-3-phosphocholine + H2O = a 1-acyl-sn-glycero-3-phosphocholine + a fatty acid + H(+). The enzyme catalyses 1-hexadecanoyl-2-(5Z,8Z,11Z,14Z-eicosatetraenoyl)-sn-glycero-3-phosphocholine + H2O = 1-hexadecanoyl-sn-glycero-3-phosphocholine + (5Z,8Z,11Z,14Z)-eicosatetraenoate + H(+). It carries out the reaction 1-hexadecanoyl-2-(9Z,12Z-octadecadienoyl)-sn-glycero-3-phosphocholine + H2O = (9Z,12Z)-octadecadienoate + 1-hexadecanoyl-sn-glycero-3-phosphocholine + H(+). The catalysed reaction is 1-hexadecanoyl-2-(9Z-octadecenoyl)-sn-glycero-3-phosphocholine + H2O = 1-hexadecanoyl-sn-glycero-3-phosphocholine + (9Z)-octadecenoate + H(+). It catalyses the reaction 1-hexadecanoyl-2-(5Z,8Z,11Z,14Z-eicosatetraenoyl)-sn-glycero-3-phosphoethanolamine + H2O = 1-hexadecanoyl-sn-glycero-3-phosphoethanolamine + (5Z,8Z,11Z,14Z)-eicosatetraenoate + H(+). The enzyme catalyses 1-hexadecanoyl-2-(9Z,12Z-octadecadienoyl)-sn-glycero-3-phosphoethanolamine + H2O = 1-hexadecanoyl-sn-glycero-3-phosphoethanolamine + (9Z,12Z)-octadecadienoate + H(+). It carries out the reaction 1-hexadecanoyl-sn-glycero-3-phosphocholine + H2O = sn-glycerol 3-phosphocholine + hexadecanoate + H(+). It participates in lipid metabolism; fatty acid metabolism. Its activity is regulated as follows. Stimulated by cytosolic Ca(2+). Functionally, calcium-dependent phospholipase A2 that selectively hydrolyzes glycerophospholipids in the sn-2 position. Compared to its human ortholog, may have no preference for the fatty acid found at the sn-2 position. This Mus musculus (Mouse) protein is Cytosolic phospholipase A2 delta.